We begin with the raw amino-acid sequence, 404 residues long: Cysteine desulfurase IscS (404 aa).

Pyridoxal 5'-phosphate contacts are provided by residues alanine 75–threonine 76, asparagine 155, glutamine 183, and serine 203–histidine 205. An N6-(pyridoxal phosphate)lysine modification is found at lysine 206. Threonine 243 serves as a coordination point for pyridoxal 5'-phosphate. The active-site Cysteine persulfide intermediate is cysteine 328. A [2Fe-2S] cluster-binding site is contributed by cysteine 328.

The protein belongs to the class-V pyridoxal-phosphate-dependent aminotransferase family. NifS/IscS subfamily. In terms of assembly, homodimer. Forms a heterotetramer with IscU, interacts with other sulfur acceptors. Pyridoxal 5'-phosphate serves as cofactor.

It is found in the cytoplasm. The enzyme catalyses (sulfur carrier)-H + L-cysteine = (sulfur carrier)-SH + L-alanine. Its pathway is cofactor biosynthesis; iron-sulfur cluster biosynthesis. Its function is as follows. Master enzyme that delivers sulfur to a number of partners involved in Fe-S cluster assembly, tRNA modification or cofactor biosynthesis. Catalyzes the removal of elemental sulfur atoms from cysteine to produce alanine. Functions as a sulfur delivery protein for Fe-S cluster synthesis onto IscU, an Fe-S scaffold assembly protein, as well as other S acceptor proteins. This is Cysteine desulfurase IscS from Shewanella halifaxensis (strain HAW-EB4).